The following is a 117-amino-acid chain: Probable non-functional immunoglobulin kappa variable 1D-42 (117 aa).

An N-terminal signal peptide occupies residues 1-22 (MDMRVPAQLLGLLLLWLPGVRF). The segment at 23–45 (DIQMTQSPSFLSASVGDRVSIIC) is framework-1. An Ig-like domain is found at 23-117 (DIQMTQSPSF…YYCKQDFSYP (95 aa)). Cysteine 45 and cysteine 110 are disulfide-bonded. A complementarity-determining-1 region spans residues 46–56 (WASEGISSNLA). Residues 57 to 71 (WYLQKPGKSPKLFLY) form a framework-2 region. The segment at 72–78 (DAKDLHP) is complementarity-determining-2. A framework-3 region spans residues 79–110 (GVSSRFSGRGSGTDFTLTIISLKPEDFAAYYC). Positions 111-117 (KQDFSYP) are complementarity-determining-3.

In terms of assembly, immunoglobulins are composed of two identical heavy chains and two identical light chains; disulfide-linked.

The protein resides in the secreted. It is found in the cell membrane. Probable non-functional open reading frame (ORF) of V region of the variable domain of immunoglobulin light chains. Non-functional ORF generally cannot participate in the synthesis of a productive immunoglobulin chain due to altered V-(D)-J or switch recombination and/or splicing site (at mRNA level) and/or conserved amino acid change (protein level). Immunoglobulins, also known as antibodies, are membrane-bound or secreted glycoproteins produced by B lymphocytes. In the recognition phase of humoral immunity, the membrane-bound immunoglobulins serve as receptors which, upon binding of a specific antigen, trigger the clonal expansion and differentiation of B lymphocytes into immunoglobulins-secreting plasma cells. Secreted immunoglobulins mediate the effector phase of humoral immunity, which results in the elimination of bound antigens. The antigen binding site is formed by the variable domain of one heavy chain, together with that of its associated light chain. Thus, each immunoglobulin has two antigen binding sites with remarkable affinity for a particular antigen. The variable domains are assembled by a process called V-(D)-J rearrangement and can then be subjected to somatic hypermutations which, after exposure to antigen and selection, allow affinity maturation for a particular antigen. The sequence is that of Probable non-functional immunoglobulin kappa variable 1D-42 from Homo sapiens (Human).